We begin with the raw amino-acid sequence, 135 residues long: UPF0102 protein Mjls_1965 (135 aa).

Belongs to the UPF0102 family.

The polypeptide is UPF0102 protein Mjls_1965 (Mycobacterium sp. (strain JLS)).